The chain runs to 138 residues: Small ribosomal subunit protein uS11c (138 aa).

Residues 1 to 22 (MAKAIPKISSRRNGRIGSRKGA) form a disordered region. The span at 9 to 22 (SSRRNGRIGSRKGA) shows a compositional bias: basic residues.

This sequence belongs to the universal ribosomal protein uS11 family. Part of the 30S ribosomal subunit.

It is found in the plastid. It localises to the chloroplast. The protein is Small ribosomal subunit protein uS11c of Nicotiana tabacum (Common tobacco).